The primary structure comprises 493 residues: Alpha-amylase-related protein (493 aa).

The first 19 residues, 1-19, serve as a signal peptide directing secretion; it reads MFKFALTQTLCLAGSLSLA. Gln-20 is subject to Pyrrolidone carboxylic acid. Cys-47 and Cys-103 form a disulfide bridge. 3 residues coordinate Ca(2+): Asn-117, Gln-168, and Asp-177. Residues Cys-156 and Cys-170 are joined by a disulfide bond. Arg-205 provides a ligand contact to chloride. The Nucleophile role is filled by Asp-207. Residue His-211 coordinates Ca(2+). Glu-244 functions as the Proton donor in the catalytic mechanism. Residues Asn-307 and Arg-342 each coordinate chloride. Intrachain disulfides connect Cys-375-Cys-381, Cys-417-Cys-440, and Cys-447-Cys-459.

This sequence belongs to the glycosyl hydrolase 13 family. As to quaternary structure, monomer. It depends on Ca(2+) as a cofactor. Requires chloride as cofactor.

It is found in the secreted. The enzyme catalyses Endohydrolysis of (1-&gt;4)-alpha-D-glucosidic linkages in polysaccharides containing three or more (1-&gt;4)-alpha-linked D-glucose units.. This Drosophila mauritiana (Fruit fly) protein is Alpha-amylase-related protein (Amyrel).